Here is a 533-residue protein sequence, read N- to C-terminus: Trigger factor (533 aa).

Residues 164 to 249 (GDQLIIDFTG…VKQVKVETDT (86 aa)) enclose the PPIase FKBP-type domain. The tract at residues 436-533 (EAAIEAEAEE…APAKKPAAKK (98 aa)) is disordered. Basic residues predominate over residues 465–477 (AAAKKAPAKKAPA). Residues 481–490 (AAKDGDEKPA) show a composition bias toward basic and acidic residues. 2 stretches are compositionally biased toward basic residues: residues 494–506 (APAK…KAST) and 515–533 (PAKK…AAKK).

This sequence belongs to the FKBP-type PPIase family. Tig subfamily.

The protein localises to the cytoplasm. The catalysed reaction is [protein]-peptidylproline (omega=180) = [protein]-peptidylproline (omega=0). Functionally, involved in protein export. Acts as a chaperone by maintaining the newly synthesized protein in an open conformation. Functions as a peptidyl-prolyl cis-trans isomerase. This chain is Trigger factor, found in Erythrobacter litoralis (strain HTCC2594).